We begin with the raw amino-acid sequence, 450 residues long: Exodeoxyribonuclease 7 large subunit (450 aa).

Belongs to the XseA family. As to quaternary structure, heterooligomer composed of large and small subunits.

It is found in the cytoplasm. The enzyme catalyses Exonucleolytic cleavage in either 5'- to 3'- or 3'- to 5'-direction to yield nucleoside 5'-phosphates.. In terms of biological role, bidirectionally degrades single-stranded DNA into large acid-insoluble oligonucleotides, which are then degraded further into small acid-soluble oligonucleotides. In Listeria monocytogenes serotype 4b (strain CLIP80459), this protein is Exodeoxyribonuclease 7 large subunit.